A 334-amino-acid polypeptide reads, in one-letter code: Beta-ketoacyl-[acyl-carrier-protein] synthase III (334 aa).

Active-site residues include cysteine 114 and histidine 260. An ACP-binding region spans residues 261-265 (QANLR). Asparagine 290 is an active-site residue.

It belongs to the thiolase-like superfamily. FabH family. In terms of assembly, homodimer.

The protein localises to the cytoplasm. The enzyme catalyses malonyl-[ACP] + acetyl-CoA + H(+) = 3-oxobutanoyl-[ACP] + CO2 + CoA. Its pathway is lipid metabolism; fatty acid biosynthesis. Catalyzes the condensation reaction of fatty acid synthesis by the addition to an acyl acceptor of two carbons from malonyl-ACP. Catalyzes the first condensation reaction which initiates fatty acid synthesis and may therefore play a role in governing the total rate of fatty acid production. Possesses both acetoacetyl-ACP synthase and acetyl transacylase activities. Its substrate specificity determines the biosynthesis of branched-chain and/or straight-chain of fatty acids. This chain is Beta-ketoacyl-[acyl-carrier-protein] synthase III, found in Clostridium tetani (strain Massachusetts / E88).